Here is a 582-residue protein sequence, read N- to C-terminus: Regulatory solute carrier protein family 1 member 1 (582 aa).

Disordered regions lie at residues 1-32 (MSSL…ARSV), 56-76 (KASA…LQVL), 143-180 (EKSW…VPQD), 303-325 (VDMS…HGQP), 363-384 (VTCQ…SGRR), 390-409 (LTPS…SESG), 426-452 (ASTS…ESAR), and 483-529 (SEGA…LSTP). The segment covering 16–32 (SGQSPEVGSPTSLARSV) has biased composition (polar residues). Positions 148 to 179 (PENQTPSPVNGLQQHRETGSVQREAGQQSVPQ) are enriched in polar residues. Residues 390-408 (LTPSDQYSQGSCHQATSES) show a composition bias toward polar residues. Composition is skewed to basic and acidic residues over residues 438–452 (SPDR…ESAR) and 490–503 (PSEH…DRPE). The UBA domain occupies 536 to 576 (IFPAADVDRILGAGFTLQEALGALHRVGGNADLALLVLLAK).

As to quaternary structure, interacts with YRDC. As to expression, expressed in epithelial and subepithelial cells of small intestine.

Its subcellular location is the cell membrane. The protein resides in the nucleus. The protein localises to the golgi apparatus. It is found in the trans-Golgi network. In terms of biological role, mediates transcriptional and post-transcriptional regulation of SLC5A1. Inhibits a dynamin and PKC-dependent exocytotic pathway of SLC5A1. Also involved in transcriptional regulation of SLC22A2. Exhibits glucose-dependent, short-term inhibition of SLC5A1 and SLC22A2 by inhibiting the release of vesicles from the trans-Golgi network. Regulates the expression of SLC5A1 in a tissue-specific manner and is specifically involved in its regulation in the small intestine. The sequence is that of Regulatory solute carrier protein family 1 member 1 (Rsc1a1) from Mus musculus (Mouse).